The primary structure comprises 394 residues: Elongation factor Tu 2 (394 aa).

The tr-type G domain maps to 10 to 204 (KPHVNVGTIG…ALDSYIPEPE (195 aa)). A G1 region spans residues 19-26 (GHVDHGKT). 19–26 (GHVDHGKT) contacts GTP. Mg(2+) is bound at residue Thr-26. The G2 stretch occupies residues 60–64 (GITIS). A G3 region spans residues 81–84 (DCPG). GTP contacts are provided by residues 81–85 (DCPGH) and 136–139 (NKCD). Residues 136–139 (NKCD) form a G4 region. The interval 174–176 (SAL) is G5.

It belongs to the TRAFAC class translation factor GTPase superfamily. Classic translation factor GTPase family. EF-Tu/EF-1A subfamily. In terms of assembly, monomer.

It is found in the cytoplasm. It catalyses the reaction GTP + H2O = GDP + phosphate + H(+). In terms of biological role, GTP hydrolase that promotes the GTP-dependent binding of aminoacyl-tRNA to the A-site of ribosomes during protein biosynthesis. In Pseudoalteromonas translucida (strain TAC 125), this protein is Elongation factor Tu 2.